A 1372-amino-acid chain; its full sequence is DNA-directed RNA polymerase subunit beta (1372 aa).

Belongs to the RNA polymerase beta chain family. The RNAP catalytic core consists of 2 alpha, 1 beta, 1 beta' and 1 omega subunit. When a sigma factor is associated with the core the holoenzyme is formed, which can initiate transcription.

It carries out the reaction RNA(n) + a ribonucleoside 5'-triphosphate = RNA(n+1) + diphosphate. Functionally, DNA-dependent RNA polymerase catalyzes the transcription of DNA into RNA using the four ribonucleoside triphosphates as substrates. This is DNA-directed RNA polymerase subunit beta from Psychrobacter arcticus (strain DSM 17307 / VKM B-2377 / 273-4).